A 680-amino-acid polypeptide reads, in one-letter code: Epithelial splicing regulatory protein 1 (680 aa).

3 RRM domains span residues Thr-224 to Gly-301, Val-325 to Ala-405, and Asp-444 to Ala-524. A Phosphoserine modification is found at Ser-542. Arg-581 carries the post-translational modification Omega-N-methylarginine.

This sequence belongs to the ESRP family. As to expression, epithelial cell-specific. Epithelial-specific expression in diverse tissues and organs with particularly notable levels of expression in skin and gastrointestinal epithelia.

It localises to the nucleus. Its function is as follows. mRNA splicing factor that regulates the formation of epithelial cell-specific isoforms. Specifically regulates the expression of FGFR2-IIIb, an epithelial cell-specific isoform of FGFR2. Also regulates the splicing of CD44, CTNND1, ENAH, 3 transcripts that undergo changes in splicing during the epithelial-to-mesenchymal transition (EMT). Acts by directly binding specific sequences in mRNAs. Binds the GU-rich sequence motifs in the ISE/ISS-3, a cis-element regulatory region present in the mRNA of FGFR2. Regulates splicing and expression of genes involved in inner ear development, auditory hair cell differentiation, and cell fate specification in the cochlear epithelium. In Mus musculus (Mouse), this protein is Epithelial splicing regulatory protein 1 (Esrp1).